Here is a 242-residue protein sequence, read N- to C-terminus: Lactate utilization protein A 2 (242 aa).

This sequence belongs to the LutA/YkgE family.

Is involved in L-lactate degradation and allows cells to grow with lactate as the sole carbon source. The chain is Lactate utilization protein A 2 from Bacillus cereus (strain Q1).